We begin with the raw amino-acid sequence, 212 residues long: Peptide methionine sulfoxide reductase MsrA (212 aa).

Cys51 is an active-site residue.

It belongs to the MsrA Met sulfoxide reductase family.

It catalyses the reaction L-methionyl-[protein] + [thioredoxin]-disulfide + H2O = L-methionyl-(S)-S-oxide-[protein] + [thioredoxin]-dithiol. The catalysed reaction is [thioredoxin]-disulfide + L-methionine + H2O = L-methionine (S)-S-oxide + [thioredoxin]-dithiol. Functionally, has an important function as a repair enzyme for proteins that have been inactivated by oxidation. Catalyzes the reversible oxidation-reduction of methionine sulfoxide in proteins to methionine. The polypeptide is Peptide methionine sulfoxide reductase MsrA (Vibrio cholerae serotype O1 (strain ATCC 39541 / Classical Ogawa 395 / O395)).